The sequence spans 591 residues: Aspartate--tRNA(Asp/Asn) ligase (591 aa).

Glu-176 is an L-aspartate binding site. Residues 200 to 203 (QLFK) form an aspartate region. L-aspartate is bound at residue Arg-222. ATP is bound by residues 222 to 224 (RDE) and Gln-231. His-450 is a binding site for L-aspartate. An ATP-binding site is contributed by Glu-484. Arg-491 is an L-aspartate binding site. Residue 536–539 (GLDR) participates in ATP binding.

It belongs to the class-II aminoacyl-tRNA synthetase family. Type 1 subfamily. In terms of assembly, homodimer.

It is found in the cytoplasm. The enzyme catalyses tRNA(Asx) + L-aspartate + ATP = L-aspartyl-tRNA(Asx) + AMP + diphosphate. Aspartyl-tRNA synthetase with relaxed tRNA specificity since it is able to aspartylate not only its cognate tRNA(Asp) but also tRNA(Asn). Reaction proceeds in two steps: L-aspartate is first activated by ATP to form Asp-AMP and then transferred to the acceptor end of tRNA(Asp/Asn). This is Aspartate--tRNA(Asp/Asn) ligase from Bacillus cereus (strain ATCC 10987 / NRS 248).